The chain runs to 81 residues: Small ribosomal subunit protein bS20 (81 aa).

This sequence belongs to the bacterial ribosomal protein bS20 family.

Functionally, binds directly to 16S ribosomal RNA. In Mycoplasma capricolum subsp. capricolum (strain California kid / ATCC 27343 / NCTC 10154), this protein is Small ribosomal subunit protein bS20.